Reading from the N-terminus, the 88-residue chain is Large ribosomal subunit protein bL27 (88 aa).

A disordered region spans residues 1-24 (MAHKKAGGSSRNGRDSEGRRLGVK).

Belongs to the bacterial ribosomal protein bL27 family.

The protein is Large ribosomal subunit protein bL27 of Methylobacterium radiotolerans (strain ATCC 27329 / DSM 1819 / JCM 2831 / NBRC 15690 / NCIMB 10815 / 0-1).